A 376-amino-acid chain; its full sequence is Alkanesulfonate monooxygenase (376 aa).

The protein belongs to the SsuD family.

The catalysed reaction is an alkanesulfonate + FMNH2 + O2 = an aldehyde + FMN + sulfite + H2O + 2 H(+). Functionally, catalyzes the desulfonation of aliphatic sulfonates. The protein is Alkanesulfonate monooxygenase of Bacillus licheniformis (strain ATCC 14580 / DSM 13 / JCM 2505 / CCUG 7422 / NBRC 12200 / NCIMB 9375 / NCTC 10341 / NRRL NRS-1264 / Gibson 46).